A 504-amino-acid polypeptide reads, in one-letter code: Anaerobic nitric oxide reductase transcription regulator NorR (504 aa).

At D57 the chain carries 4-aspartylphosphate. Residues 187–416 (MIGLSPGMTQ…LEHAIHRAVV (230 aa)) form the Sigma-54 factor interaction domain. Residues 215-222 (GETGTGKE) and 278-287 (ADNGTLFLDE) contribute to the ATP site. The segment at residues 479–498 (WAACARMLETDVANLHRLAK) is a DNA-binding region (H-T-H motif).

It functions in the pathway nitrogen metabolism; nitric oxide reduction. Its function is as follows. Required for the expression of anaerobic nitric oxide (NO) reductase, acts as a transcriptional activator for at least the norVW operon. Activation also requires sigma-54. The polypeptide is Anaerobic nitric oxide reductase transcription regulator NorR (Escherichia coli O139:H28 (strain E24377A / ETEC)).